Here is an 88-residue protein sequence, read N- to C-terminus: Long neurotoxin LNTX-2 (88 aa).

The N-terminal stretch at methionine 1–alanine 21 is a signal peptide. 4 cysteine pairs are disulfide-bonded: cysteine 24-cysteine 42, cysteine 35-cysteine 63, cysteine 67-cysteine 78, and cysteine 79-cysteine 84.

This sequence belongs to the three-finger toxin family. Long-chain subfamily. Type II alpha-neurotoxin sub-subfamily. Expressed by the venom gland.

The protein localises to the secreted. Functionally, binds with high affinity to muscular nicotinic acetylcholine receptors (nAChRs), whereas it binds with a low affinity to neuronal alpha-7/CHRNA7 nAChRs. The polypeptide is Long neurotoxin LNTX-2 (Demansia vestigiata (Lesser black whip snake)).